The primary structure comprises 953 residues: Translation initiation factor IF-2 (953 aa).

Disordered stretches follow at residues 52-241 (KASK…QQEA) and 279-363 (TKLK…TERK). Basic and acidic residues-rich tracts occupy residues 80 to 89 (TGSEHVEKTQ), 98 to 111 (FKAEREARAKEQAA), and 140 to 188 (QGDK…ENHK). Over residues 191-207 (RFTNQKKQGRQEPQSKS) the composition is skewed to polar residues. The segment covering 229–241 (RQSETRFRAQQEA) has biased composition (basic and acidic residues). The span at 282–291 (KSSNISAKST) shows a compositional bias: polar residues. The span at 300–317 (ARPEKNRELTHHSQEGQK) shows a compositional bias: basic and acidic residues. Residues 322 to 338 (SWNSQNQVRNQKNSNWN) are compositionally biased toward low complexity. The segment covering 339–348 (KNKKTKKGKN) has biased composition (basic residues). In terms of domain architecture, tr-type G spans 454-623 (ERAPVVTIMG…LLVAEVEELK (170 aa)). The tract at residues 463–470 (GHVDHGKT) is G1. 463–470 (GHVDHGKT) provides a ligand contact to GTP. The G2 stretch occupies residues 488 to 492 (GITQH). A G3 region spans residues 509-512 (DTPG). GTP is bound by residues 509-513 (DTPGH) and 563-566 (NKID). Positions 563-566 (NKID) are G4. The tract at residues 599 to 601 (SAK) is G5.

Belongs to the TRAFAC class translation factor GTPase superfamily. Classic translation factor GTPase family. IF-2 subfamily.

The protein resides in the cytoplasm. Its function is as follows. One of the essential components for the initiation of protein synthesis. Protects formylmethionyl-tRNA from spontaneous hydrolysis and promotes its binding to the 30S ribosomal subunits. Also involved in the hydrolysis of GTP during the formation of the 70S ribosomal complex. The chain is Translation initiation factor IF-2 from Streptococcus pyogenes serotype M4 (strain MGAS10750).